The sequence spans 520 residues: Bifunctional purine biosynthesis protein PurH (520 aa).

Positions 1–147 constitute an MGS-like domain; that stretch reads MAKIGRALIS…KNNRDVTVVV (147 aa).

Belongs to the PurH family.

It catalyses the reaction (6R)-10-formyltetrahydrofolate + 5-amino-1-(5-phospho-beta-D-ribosyl)imidazole-4-carboxamide = 5-formamido-1-(5-phospho-D-ribosyl)imidazole-4-carboxamide + (6S)-5,6,7,8-tetrahydrofolate. It carries out the reaction IMP + H2O = 5-formamido-1-(5-phospho-D-ribosyl)imidazole-4-carboxamide. The protein operates within purine metabolism; IMP biosynthesis via de novo pathway; 5-formamido-1-(5-phospho-D-ribosyl)imidazole-4-carboxamide from 5-amino-1-(5-phospho-D-ribosyl)imidazole-4-carboxamide (10-formyl THF route): step 1/1. Its pathway is purine metabolism; IMP biosynthesis via de novo pathway; IMP from 5-formamido-1-(5-phospho-D-ribosyl)imidazole-4-carboxamide: step 1/1. This Geobacter sp. (strain M21) protein is Bifunctional purine biosynthesis protein PurH.